Consider the following 427-residue polypeptide: MKILTGTINELLNEVKAENNTNNSLQVESEVKSIIEKVKKDGDQALFDFTSQFDGVRLTELRVQTADIQSASSKVDPAFLVALQQAKANIESFHSKQKQHAFLDSEKDGVIRGQLIRPLETVGIYVPGGTAAYPSSVLMNVLPAKIAGVKRIVMITPPAENGINPHVLAAAQLAGVDEIYQVGGAHGIAALAHGTESIPKVDKIVGPGNIYVATAKREVFGLVDIDMIAGPSEIVVLADENANPAFIASDLLSQAEHDILARAILITTSKKIAEETQNEINKQLENLPRKAIAQKSIETQGKIIIAANTQEMFDIMNEIAPEHLEVQLENPMNYLNQIKNAGSIFLGSYASEPLGDYFAGPNHVLPTSGTAKFFSPLGVEDFTKRSAFISYTKEALAKEKDAIVLLAKKEGLDAHAKAIQIRFEEEN.

Positions 232, 254, and 257 each coordinate substrate. Zn(2+) is bound by residues Q254 and H257. Residues E322 and H323 each act as proton acceptor in the active site. Substrate-binding residues include H323, D356, E410, and H415. Residue D356 participates in Zn(2+) binding. H415 is a Zn(2+) binding site.

Belongs to the histidinol dehydrogenase family. It depends on Zn(2+) as a cofactor.

The catalysed reaction is L-histidinol + 2 NAD(+) + H2O = L-histidine + 2 NADH + 3 H(+). Its pathway is amino-acid biosynthesis; L-histidine biosynthesis; L-histidine from 5-phospho-alpha-D-ribose 1-diphosphate: step 9/9. In terms of biological role, catalyzes the sequential NAD-dependent oxidations of L-histidinol to L-histidinaldehyde and then to L-histidine. The chain is Histidinol dehydrogenase from Listeria monocytogenes serovar 1/2a (strain ATCC BAA-679 / EGD-e).